A 599-amino-acid polypeptide reads, in one-letter code: Microtubule-associated protein 70-2 (599 aa).

The tract at residues 1–30 is disordered; the sequence is MADGGGGEEGSASALRGSARRRGAVQPAGL. Positions 43-349 form a coiled coil; sequence DPVKVELNRL…ARSEAQLKEK (307 aa). Residues 227 to 460 form a required for targeting to microtubules region; the sequence is ILDRLHRQKV…HLLNRSTDAV (234 aa). Disordered regions lie at residues 357-453 and 557-599; these read LEDG…PHLL and AMRL…RNLQ. Positions 404 to 420 are enriched in low complexity; the sequence is RRSPSFNSRSSLSTSSS. A coiled-coil region spans residues 533-570; the sequence is LTKAMEVEAKKMRREVAAMEKEVAAMRLDKDQENKAKR. Over residues 557 to 568 the composition is skewed to basic and acidic residues; it reads AMRLDKDQENKA.

Belongs to the MAP70 family.

The protein localises to the cytoplasm. It is found in the cytoskeleton. Functionally, plant-specific protein that interact with microtubules. The sequence is that of Microtubule-associated protein 70-2 (MAP70.2) from Oryza sativa subsp. japonica (Rice).